A 336-amino-acid polypeptide reads, in one-letter code: MLHGVLLIALFSCAAFYIGEMSFVRSISFSPMIVGIILGMLYANSLRNHLPETWVPGIQFCSKKILRIGIILYGFRLTFQDVMAIGLPAMLIDVIIVAVTICGGIYLGKLLKMDRGIALLTSIGSGICGAAAILGAESTIKAKPYKTAVSVSTVVIFGTISMFLYPFLYRNGFCALTPDQMGIYTGATLHEVAHVVGAGDAMGNGISDSAIIVKMIRVMMLVPVLLITTYLVARARKRQVQKGQKFQKIAVPWFAIGFMGVIAFNSFDLLPAQLVAGINTLDTFLLTMAMTALGTETSIDKFRKAGAKPFVLALLLYVWLVVGGYFLVKYLTPYLM.

A run of 8 helical transmembrane segments spans residues 2–19 (LHGV…FYIG), 23–45 (FVRS…YANS), 85–107 (IGLP…GIYL), 117–134 (IALL…AAIL), 147–169 (TAVS…PFLY), 210–232 (AIIV…TYLV), 253–275 (WFAI…AQLV), and 310–332 (FVLA…KYLT).

It belongs to the UPF0324 family.

Its subcellular location is the cell membrane. This is UPF0324 membrane protein BT_1919 from Bacteroides thetaiotaomicron (strain ATCC 29148 / DSM 2079 / JCM 5827 / CCUG 10774 / NCTC 10582 / VPI-5482 / E50).